A 134-amino-acid polypeptide reads, in one-letter code: Cytochrome b5 (134 aa).

The Cytochrome b5 heme-binding domain occupies 6-82; sequence TKTFTRAEVA…MKKYKIGELV (77 aa). Residues histidine 41 and histidine 65 each coordinate heme. The tract at residues 86-105 is disordered; sequence RTSVAQKSEPTWSTEQQTEE. The segment covering 87–105 has biased composition (polar residues); it reads TSVAQKSEPTWSTEQQTEE. A helical membrane pass occupies residues 111 to 131; it reads WLVPLVLCLVATLFYKFFFGG.

The protein belongs to the cytochrome b5 family.

The protein localises to the endoplasmic reticulum membrane. It localises to the microsome membrane. In terms of biological role, cytochrome b5 is a membrane-bound hemoprotein which functions as an electron carrier for several membrane-bound oxygenases. This is Cytochrome b5 (Cyt-b5) from Drosophila melanogaster (Fruit fly).